The primary structure comprises 64 residues: Large ribosomal subunit protein bL35 (64 aa).

This sequence belongs to the bacterial ribosomal protein bL35 family.

This Shewanella halifaxensis (strain HAW-EB4) protein is Large ribosomal subunit protein bL35.